The following is a 479-amino-acid chain: Ribosomal RNA small subunit methyltransferase F (479 aa).

S-adenosyl-L-methionine contacts are provided by residues 125–131 (AAAPGSK), Glu-149, Asp-176, and Asp-194. Residue Cys-247 is the Nucleophile of the active site.

It belongs to the class I-like SAM-binding methyltransferase superfamily. RsmB/NOP family.

Its subcellular location is the cytoplasm. The enzyme catalyses cytidine(1407) in 16S rRNA + S-adenosyl-L-methionine = 5-methylcytidine(1407) in 16S rRNA + S-adenosyl-L-homocysteine + H(+). In terms of biological role, specifically methylates the cytosine at position 1407 (m5C1407) of 16S rRNA. The chain is Ribosomal RNA small subunit methyltransferase F from Citrobacter koseri (strain ATCC BAA-895 / CDC 4225-83 / SGSC4696).